A 314-amino-acid chain; its full sequence is Ribosomal protein uL3 glutamine methyltransferase (314 aa).

Belongs to the protein N5-glutamine methyltransferase family. PrmB subfamily.

The enzyme catalyses L-glutaminyl-[ribosomal protein uL3] + S-adenosyl-L-methionine = N(5)-methyl-L-glutaminyl-[ribosomal protein uL3] + S-adenosyl-L-homocysteine + H(+). Its function is as follows. Methylates large ribosomal subunit protein uL3 on a specific glutamine residue. This is Ribosomal protein uL3 glutamine methyltransferase from Shewanella oneidensis (strain ATCC 700550 / JCM 31522 / CIP 106686 / LMG 19005 / NCIMB 14063 / MR-1).